A 475-amino-acid polypeptide reads, in one-letter code: Ribulose bisphosphate carboxylase large chain (475 aa).

A propeptide spanning residues 1 to 2 (MS) is cleaved from the precursor. P3 is modified (N-acetylproline). At K14 the chain carries N6,N6,N6-trimethyllysine. Residues N123 and T173 each coordinate substrate. The Proton acceptor role is filled by K175. K177 lines the substrate pocket. Mg(2+) contacts are provided by K201, D203, and E204. Position 201 is an N6-carboxylysine (K201). H294 functions as the Proton acceptor in the catalytic mechanism. Substrate is bound by residues R295, H327, and S379.

The protein belongs to the RuBisCO large chain family. Type I subfamily. In terms of assembly, heterohexadecamer of 8 large chains and 8 small chains; disulfide-linked. The disulfide link is formed within the large subunit homodimers. The cofactor is Mg(2+). Post-translationally, the disulfide bond which can form in the large chain dimeric partners within the hexadecamer appears to be associated with oxidative stress and protein turnover.

Its subcellular location is the plastid. The protein resides in the chloroplast. The catalysed reaction is 2 (2R)-3-phosphoglycerate + 2 H(+) = D-ribulose 1,5-bisphosphate + CO2 + H2O. The enzyme catalyses D-ribulose 1,5-bisphosphate + O2 = 2-phosphoglycolate + (2R)-3-phosphoglycerate + 2 H(+). In terms of biological role, ruBisCO catalyzes two reactions: the carboxylation of D-ribulose 1,5-bisphosphate, the primary event in carbon dioxide fixation, as well as the oxidative fragmentation of the pentose substrate in the photorespiration process. Both reactions occur simultaneously and in competition at the same active site. The sequence is that of Ribulose bisphosphate carboxylase large chain from Plumbago auriculata (Cape leadwort).